Here is a 184-residue protein sequence, read N- to C-terminus: Latex serine proteinase inhibitor (184 aa).

Residues Cys-45 and Cys-89 are joined by a disulfide bond. N-linked (GlcNAc...) asparagine glycans are attached at residues Asn-84 and Asn-90. Cys-142 and Cys-153 are joined by a disulfide.

Belongs to the protease inhibitor I3 (leguminous Kunitz-type inhibitor) family.

It is found in the secreted. The protein resides in the extracellular space. The polypeptide is Latex serine proteinase inhibitor (Carica papaya (Papaya)).